The primary structure comprises 210 residues: Shikimate kinase (210 aa).

Residue 34 to 39 (GAGKSV) coordinates ATP. Ser38 lines the Mg(2+) pocket. Substrate is bound by residues Asp56, Arg80, and Gly102. Arg140 contributes to the ATP binding site. Arg159 provides a ligand contact to substrate.

Belongs to the shikimate kinase family. As to quaternary structure, monomer. Mg(2+) serves as cofactor.

Its subcellular location is the cytoplasm. The catalysed reaction is shikimate + ATP = 3-phosphoshikimate + ADP + H(+). It functions in the pathway metabolic intermediate biosynthesis; chorismate biosynthesis; chorismate from D-erythrose 4-phosphate and phosphoenolpyruvate: step 5/7. Catalyzes the specific phosphorylation of the 3-hydroxyl group of shikimic acid using ATP as a cosubstrate. This chain is Shikimate kinase, found in Bartonella quintana (strain Toulouse) (Rochalimaea quintana).